Reading from the N-terminus, the 241-residue chain is Large ribosomal subunit protein uL3 (241 aa).

At Gln-157 the chain carries N5-methylglutamine.

This sequence belongs to the universal ribosomal protein uL3 family. Part of the 50S ribosomal subunit. Forms a cluster with proteins L14 and L19. Methylated by PrmB.

In terms of biological role, one of the primary rRNA binding proteins, it binds directly near the 3'-end of the 23S rRNA, where it nucleates assembly of the 50S subunit. The protein is Large ribosomal subunit protein uL3 of Vesicomyosocius okutanii subsp. Calyptogena okutanii (strain HA).